We begin with the raw amino-acid sequence, 375 residues long: Transcription factor E2F4 (375 aa).

Residues 12-81 mediate DNA binding; sequence SRHEKSLGLL…KNSIQWKGVG (70 aa). The interval 39 to 61 is leucine-zipper; that stretch reads LKAAADTLAVRQKRRIYDITNVL. Positions 44 to 81 match the DEF box motif; sequence DTLAVRQKRRIYDITNVLEGIGLIEKKSKNSIQWKGVG. A dimerization region spans residues 82-177; the sequence is PGCNTREIAD…NTNGQKKFQI (96 aa). The tract at residues 197 to 300 is disordered; sequence SSAPVVVPVP…PDPSTSFQPI (104 aa). The segment covering 220-270 has biased composition (polar residues); it reads STPQRPALTPQNDIATSPAPTVPHSTISNAESQDCPTGQTFSMENTTSSRL. The segment covering 280–296 has biased composition (low complexity); the sequence is SSASLDNSNDSPDPSTS. Residues 299 to 375 form a transactivation region; that stretch reads PIKSDLSDVL…CDLFDVPINL (77 aa).

Belongs to the E2F/DP family. Component of the drtf1/e2f transcription factor complex. Component of the EDM complex, at least composed of e2f4, e2f5, mcidas and tfdp1.

The protein resides in the nucleus. Its function is as follows. Transcription activator that binds DNA cooperatively with DP proteins through the E2 recognition site, 5'-TTTC[CG]CGC-3' found in the promoter region of a number of genes. Component of the EDM complex, a complex specifically required for multiciliate cell differentiation: the EDM complex binds and activate genes required for centriole biogenesis. Activates genes required for centriole assembly (plk4, cep152) and genes specifically required for motile cilia formation (foxj1). Also promotes the deuterosome pathway of centriole biogenesis by activating expression of deup1, but not its paralog cep63. This chain is Transcription factor E2F4, found in Xenopus laevis (African clawed frog).